The chain runs to 153 residues: MTDAEEPFWRAKRLEQMTRAEWESLCDGCAKCCLVKLEDEDTGELEYTDIACRLLDAETCRCSDYANRSERVPDCVTLTPKNLEDIDWMPPSCAYRLLKEGKDLPWWHPLVSGEYEAVRLAGMSVHGRFLFEDEADMEDLEGRIVSWPLMPPE.

The protein belongs to the UPF0260 family.

This is UPF0260 protein Plav_0898 from Parvibaculum lavamentivorans (strain DS-1 / DSM 13023 / NCIMB 13966).